Reading from the N-terminus, the 357-residue chain is SNF1-related protein kinase regulatory subunit gamma-like PV42b (357 aa).

CBS domains follow at residues methionine 16–serine 97, histidine 113–leucine 185, alanine 198–leucine 273, and serine 293–serine 351.

This sequence belongs to the 5'-AMP-activated protein kinase gamma subunit family. Expressed highly in rosette leaves, cauline leaves, open flowers, developing siliques and dry seeds, but at a low level in stems and floral buds.

Plays redundant role with PV42a in regulating male gametogenesis and pollen tube guidance. The polypeptide is SNF1-related protein kinase regulatory subunit gamma-like PV42b (PV42B) (Arabidopsis thaliana (Mouse-ear cress)).